The following is a 484-amino-acid chain: Poly(A) polymerase alpha-B (484 aa).

The short motif at R240–K257 is the Nuclear localization signal 1 element. Disordered stretches follow at residues S276–L314, V326–P356, and K375–R484. The short motif at K392 to K407 is the Nuclear localization signal 2 element. Positions E423 to S441 are enriched in basic and acidic residues. A compositionally biased stretch (low complexity) spans S451–S464.

This sequence belongs to the poly(A) polymerase family. In terms of assembly, monomer.

It is found in the nucleus. It catalyses the reaction RNA(n) + ATP = RNA(n)-3'-adenine ribonucleotide + diphosphate. Its function is as follows. Polymerase that creates the 3'-poly(A) tail of mRNA's. May acquire specificity through interaction with a cleavage and polyadenylation factor (CPSF). This chain is Poly(A) polymerase alpha-B (papola-b), found in Xenopus laevis (African clawed frog).